A 249-amino-acid polypeptide reads, in one-letter code: (S)-1-Phenylethanol dehydrogenase (249 aa).

NAD(+) is bound by residues 17-19, D38, 61-63, N89, and Y93; these read NGI and CDV. S141 serves as a coordination point for substrate. Y154 functions as the Proton acceptor in the catalytic mechanism. NAD(+) is bound by residues K158, 184–187, and T191; that span reads PSLV.

The protein belongs to the short-chain dehydrogenases/reductases (SDR) family. Homotetramer.

It carries out the reaction (S)-1-phenylethanol + NAD(+) = acetophenone + NADH + H(+). Its function is as follows. Catalyzes the NAD-dependent stereospecific oxidation of (S)-1-phenylethanol to acetophenone in the degradation of ethylbenzene. This Aromatoleum aromaticum (strain DSM 19018 / LMG 30748 / EbN1) (Azoarcus sp. (strain EbN1)) protein is (S)-1-Phenylethanol dehydrogenase (ped).